Consider the following 312-residue polypeptide: Glycerol-3-phosphate phosphatase (312 aa).

The active-site Nucleophile is the Asp30. Mg(2+) contacts are provided by Asp30, Asp32, and Asp251. Asp32 functions as the Proton donor in the catalytic mechanism.

This sequence belongs to the HAD-like hydrolase superfamily. CbbY/CbbZ/Gph/YieH family. In terms of assembly, homodimer. The cofactor is Mg(2+).

The enzyme catalyses O-phospho-L-tyrosyl-[protein] + H2O = L-tyrosyl-[protein] + phosphate. It catalyses the reaction sn-glycerol 1-phosphate + H2O = glycerol + phosphate. The catalysed reaction is sn-glycerol 3-phosphate + H2O = glycerol + phosphate. Its function is as follows. Glycerol-3-phosphate phosphatase hydrolyzing glycerol-3-phosphate into glycerol. Thereby, regulates the cellular levels of glycerol-3-phosphate a metabolic intermediate of glucose, lipid and energy metabolism. Was also shown to have a 2-phosphoglycolate phosphatase activity and a tyrosine-protein phosphatase activity. However, their physiological relevance is unclear. In vitro, also has a phosphatase activity toward ADP, ATP, GDP and GTP. This is Glycerol-3-phosphate phosphatase from Gallus gallus (Chicken).